A 981-amino-acid polypeptide reads, in one-letter code: Ubiquitin carboxyl-terminal hydrolase 15 (981 aa).

The residue at position 2 (Ala2) is an N-acetylalanine. The segment at 2 to 223 is mediates interaction with SART3; sequence AEGGAADLDT…KNEDGTWPRG (222 aa). The 112-residue stretch at 7-118 folds into the DUSP domain; sequence ADLDTQRSDI…GQEPIARKVV (112 aa). The segment at 216–237 is disordered; that stretch reads EDGTWPRGPSTPKSPGASNFST. Thr226 is modified (phosphothreonine). Over residues 226–237 the composition is skewed to polar residues; sequence TPKSPGASNFST. Ser229 and Ser242 each carry phosphoserine. Residues 289–933 form the USP domain; sequence CGLSNLGNTC…AAYVLFYQRQ (645 aa). Cys298 serves as the catalytic Nucleophile. Residue Thr602 is modified to Phosphothreonine. Residues 633 to 694 are disordered; sequence CCEDQNINGN…GGDNDSENGL (62 aa). The segment covering 656–673 has biased composition (acidic residues); sequence METDEPDDESSQDQELPS. His891 acts as the Proton acceptor in catalysis. The tract at residues 952–981 is disordered; that stretch reads SAATGIPLESDEDSNDNDNDLENENCMHTN. Residues 960–974 show a composition bias toward acidic residues; sequence ESDEDSNDNDNDLEN. 2 positions are modified to phosphoserine: Ser961 and Ser965.

This sequence belongs to the peptidase C19 family. As to quaternary structure, a homodimer structure has been reported; however it is unclear whether the protein form a homodimer in vivo. Identified in a complex with the COP9 signalosome complex (CSN). Interacts with SMAD1, SMAD2 and SMAD3; the interaction is direct. Forms a complex with SMURF2 and SMAD7. Interacts with TGFBR1. Interacts with SART3; the interaction is direct. May interact with RNF20 and RNF40. May interact with PRKN. Interacts with INCA1. Post-translationally, phosphorylated. Phosphorylation protects against ubiquitination and subsequent degradation by the proteasome. Ubiquitinated, leading to degradation by the proteasome. In terms of tissue distribution, widely expressed with highest levels in the brain and spleen, and lowest levels in the muscles (at protein level). In the midbrain, strong expression in neurons including the dopaminergic neurons (at protein level). Widely expressed with highest levels in testis, heart and liver.

Its subcellular location is the cytoplasm. The protein localises to the nucleus. It is found in the mitochondrion. The catalysed reaction is Thiol-dependent hydrolysis of ester, thioester, amide, peptide and isopeptide bonds formed by the C-terminal Gly of ubiquitin (a 76-residue protein attached to proteins as an intracellular targeting signal).. Hydrolase that removes conjugated ubiquitin from target proteins and regulates various pathways such as the TGF-beta receptor signaling, NF-kappa-B and RNF41/NRDP1-PRKN pathways. Acts as a key regulator of TGF-beta receptor signaling pathway, but the precise mechanism is still unclear: according to a report, acts by promoting deubiquitination of monoubiquitinated R-SMADs (SMAD1, SMAD2 and/or SMAD3), thereby alleviating inhibition of R-SMADs and promoting activation of TGF-beta target genes. According to another reports, regulates the TGF-beta receptor signaling pathway by mediating deubiquitination and stabilization of TGFBR1, leading to an enhanced TGF-beta signal. Able to mediate deubiquitination of monoubiquitinated substrates, 'Lys-27'-, 'Lys-48'- and 'Lys-63'-linked polyubiquitin chains. May also regulate gene expression and/or DNA repair through the deubiquitination of histone H2B. Acts as an inhibitor of mitophagy by counteracting the action of parkin (PRKN): hydrolyzes cleavage of 'Lys-48'- and 'Lys-63'-linked polyubiquitin chains attached by parkin on target proteins such as MFN2, thereby reducing parkin's ability to drive mitophagy. Acts as an associated component of COP9 signalosome complex (CSN) and regulates different pathways via this association: regulates NF-kappa-B by mediating deubiquitination of NFKBIA and deubiquitinates substrates bound to VCP. Involved in endosome organization by mediating deubiquitination of SQSTM1: ubiquitinated SQSTM1 forms a molecular bridge that restrains cognate vesicles in the perinuclear region and its deubiquitination releases target vesicles for fast transport into the cell periphery. Acts as a negative regulator of antifungal immunity by mediating 'Lys-27'-linked deubiquitination of CARD9, thereby inactivating CARD9. This is Ubiquitin carboxyl-terminal hydrolase 15 (Usp15) from Mus musculus (Mouse).